A 55-amino-acid polypeptide reads, in one-letter code: MASSTDVRPKITLACEVCKHRNYITKKNRRNDPDRLELKKFCRNCGSHQAHRETR.

Belongs to the bacterial ribosomal protein bL33 family.

The chain is Large ribosomal subunit protein bL33A from Mycobacterium ulcerans (strain Agy99).